The sequence spans 228 residues: Ribonuclease 3 (228 aa).

In terms of domain architecture, RNase III spans 5-127; that stretch reads KDALQDRLGY…LFGAIYLDGG (123 aa). Glu-40 contributes to the Mg(2+) binding site. Residue Asp-44 is part of the active site. Residues Asp-113 and Glu-116 each contribute to the Mg(2+) site. Glu-116 is an active-site residue. The DRBM domain maps to 154-224; the sequence is DPKTRLQEHL…AEQMLKRLED (71 aa). The interval 200 to 228 is disordered; it reads AEGEAGSRRKAEQQAAEQMLKRLEDKHER. Over residues 218–228 the composition is skewed to basic and acidic residues; the sequence is MLKRLEDKHER.

It belongs to the ribonuclease III family. As to quaternary structure, homodimer. Mg(2+) serves as cofactor.

The protein resides in the cytoplasm. The catalysed reaction is Endonucleolytic cleavage to 5'-phosphomonoester.. Its function is as follows. Digests double-stranded RNA. Involved in the processing of primary rRNA transcript to yield the immediate precursors to the large and small rRNAs (23S and 16S). Processes some mRNAs, and tRNAs when they are encoded in the rRNA operon. Processes pre-crRNA and tracrRNA of type II CRISPR loci if present in the organism. The chain is Ribonuclease 3 from Alkalilimnicola ehrlichii (strain ATCC BAA-1101 / DSM 17681 / MLHE-1).